A 608-amino-acid polypeptide reads, in one-letter code: MSAVFDASAFLATCSNRPGVYRMFDADAKLLYVGKAKSLKKRLASYFRKSGLAPKTAALVARIAQVETTITANETEALLLEQTLIKEWRPPYNILLRDDKSYPFVFLSSEDEYPRLSLHRGAKKRKGRYFGPYPSAGAIRESLNLLQKAFLVRQCEDSYFRNRTRPCLQYQIKRCKGPCVGLVSPEEYAEDVRHSVMFLEGRSNALADELNVGMEQAAMRLDFEKAAELRDQVAILRRVQDQQSMEGGNGDVDIVAAIVTPGGACVHLISVRGGRVLGSKNFFPQVAIEEEVGEVLLAFLGQYYLSHQERDLPAELIVNVTHEDFPVLVSAIAEARGRELEISYRVRGTRARWQQLAVTNAEQALGARLANRQHVAARFEALAEALDLAEPPQRLECFDISHSSGEATVASCVVFGPEGPLKSDYRRYNIEGVTAGDDYAAMHQALTRRFSRLKDGEGKMPDILLVDGGKGQLAMAQEVLQELAVAGLILLGVAKGVTRKPGLETLYLNDASHEFTLPADSPALHLIQQIRDEAHRFAITGHRARRGKARRTSTLEDVPGVGPKRRRDLLKHFGGLQELSRASIDELAKAPGISKKLAEQIYAVLHSE.

A GIY-YIG domain is found at 16-94 (NRPGVYRMFD…IKEWRPPYNI (79 aa)). The UVR domain maps to 204 to 239 (NALADELNVGMEQAAMRLDFEKAAELRDQVAILRRV).

Belongs to the UvrC family. In terms of assembly, interacts with UvrB in an incision complex.

It is found in the cytoplasm. Its function is as follows. The UvrABC repair system catalyzes the recognition and processing of DNA lesions. UvrC both incises the 5' and 3' sides of the lesion. The N-terminal half is responsible for the 3' incision and the C-terminal half is responsible for the 5' incision. The polypeptide is UvrABC system protein C (Pseudomonas aeruginosa (strain LESB58)).